Here is a 78-residue protein sequence, read N- to C-terminus: Large ribosomal subunit protein bL31 (78 aa).

The protein belongs to the bacterial ribosomal protein bL31 family. Type A subfamily. In terms of assembly, part of the 50S ribosomal subunit.

Functionally, binds the 23S rRNA. This chain is Large ribosomal subunit protein bL31 (rpmE), found in Rickettsia typhi (strain ATCC VR-144 / Wilmington).